Here is a 239-residue protein sequence, read N- to C-terminus: U-scoloptoxin(11)-Sm3a (239 aa).

Residues Met1–Ser16 form the signal peptide.

The protein belongs to the scoloptoxin-11 family. Post-translationally, contains 9 disulfide bonds. Expressed by the venom gland.

The protein resides in the secreted. The polypeptide is U-scoloptoxin(11)-Sm3a (Scolopendra morsitans (Tanzanian blue ringleg centipede)).